Reading from the N-terminus, the 119-residue chain is Large ribosomal subunit protein bL20 (119 aa).

This sequence belongs to the bacterial ribosomal protein bL20 family.

Its function is as follows. Binds directly to 23S ribosomal RNA and is necessary for the in vitro assembly process of the 50S ribosomal subunit. It is not involved in the protein synthesizing functions of that subunit. This is Large ribosomal subunit protein bL20 from Jannaschia sp. (strain CCS1).